Reading from the N-terminus, the 234-residue chain is HTH-type transcriptional regulator SmoD (234 aa).

The region spanning leucine 8–valine 76 is the HTH gntR-type domain. A DNA-binding region (H-T-H motif) is located at residues glutamate 36–alanine 55.

It localises to the cytoplasm. Its function is as follows. Probably regulates expression of genes involved in the sulfoquinovose monooxygenase (sulfo-SMO) pathway (smoABCDEFGHI). In Agrobacterium fabrum (strain C58 / ATCC 33970) (Agrobacterium tumefaciens (strain C58)), this protein is HTH-type transcriptional regulator SmoD.